The sequence spans 359 residues: Dihydroorotate dehydrogenase (quinone) (359 aa).

Residues 61 to 65 (AGYDK) and threonine 85 contribute to the FMN site. Lysine 65 contributes to the substrate binding site. 110–114 (NRLGF) lines the substrate pocket. FMN is bound by residues asparagine 139 and asparagine 170. Residue asparagine 170 coordinates substrate. Residue serine 173 is the Nucleophile of the active site. Asparagine 175 is a binding site for substrate. 2 residues coordinate FMN: lysine 211 and serine 239. 240–241 (NT) lines the substrate pocket. Residues glycine 262, glycine 291, and 312–313 (YT) each bind FMN.

This sequence belongs to the dihydroorotate dehydrogenase family. Type 2 subfamily. Monomer. The cofactor is FMN.

It localises to the cell membrane. It carries out the reaction (S)-dihydroorotate + a quinone = orotate + a quinol. It participates in pyrimidine metabolism; UMP biosynthesis via de novo pathway; orotate from (S)-dihydroorotate (quinone route): step 1/1. Its function is as follows. Catalyzes the conversion of dihydroorotate to orotate with quinone as electron acceptor. The protein is Dihydroorotate dehydrogenase (quinone) of Mesorhizobium japonicum (strain LMG 29417 / CECT 9101 / MAFF 303099) (Mesorhizobium loti (strain MAFF 303099)).